The following is a 475-amino-acid chain: Ribulose bisphosphate carboxylase large chain (475 aa).

Positions 1–2 are excised as a propeptide; it reads MS. An N-acetylproline modification is found at proline 3. Lysine 14 bears the N6,N6,N6-trimethyllysine mark. The substrate site is built by asparagine 123 and threonine 173. Lysine 175 acts as the Proton acceptor in catalysis. Lysine 177 is a substrate binding site. Residues lysine 201, aspartate 203, and glutamate 204 each contribute to the Mg(2+) site. Lysine 201 carries the N6-carboxylysine modification. Histidine 294 serves as the catalytic Proton acceptor. Residues arginine 295, histidine 327, and serine 379 each coordinate substrate.

The protein belongs to the RuBisCO large chain family. Type I subfamily. As to quaternary structure, heterohexadecamer of 8 large chains and 8 small chains; disulfide-linked. The disulfide link is formed within the large subunit homodimers. Mg(2+) is required as a cofactor. The disulfide bond which can form in the large chain dimeric partners within the hexadecamer appears to be associated with oxidative stress and protein turnover.

Its subcellular location is the plastid. It is found in the chloroplast. It carries out the reaction 2 (2R)-3-phosphoglycerate + 2 H(+) = D-ribulose 1,5-bisphosphate + CO2 + H2O. The catalysed reaction is D-ribulose 1,5-bisphosphate + O2 = 2-phosphoglycolate + (2R)-3-phosphoglycerate + 2 H(+). In terms of biological role, ruBisCO catalyzes two reactions: the carboxylation of D-ribulose 1,5-bisphosphate, the primary event in carbon dioxide fixation, as well as the oxidative fragmentation of the pentose substrate in the photorespiration process. Both reactions occur simultaneously and in competition at the same active site. The sequence is that of Ribulose bisphosphate carboxylase large chain from Viscum album (European mistletoe).